The following is a 633-amino-acid chain: Leucine-rich repeat and IQ domain-containing protein 3 (633 aa).

LRR repeat units follow at residues 51 to 72 (SLRVCIFSNNFLTDIQPLQSCK), 73 to 94 (KLIKLDLHGNQIKTLPDKNFWS), and 98 to 119 (NLKLLYLHDNGFSKLKNICVLS). Positions 132–179 (CPVSLKKGYRHVLVNSIWPLKALDHHVISDEEIIQNWRLPERFKTFSP) constitute an LRRCT domain. Positions 215–244 (HNSPVLIIQRWIRGFIVRKHLSPYFKHKKH) constitute an IQ domain. The interval 324–343 (SKQPRHHIHKGQKAMKAESE) is disordered. Positions 325–336 (KQPRHHIHKGQK) are enriched in basic residues. Residues 556 to 617 (IEKWEEQKYK…AKVEYIKTFY (62 aa)) are a coiled coil.

In Mus musculus (Mouse), this protein is Leucine-rich repeat and IQ domain-containing protein 3 (Lrriq3).